Here is a 549-residue protein sequence, read N- to C-terminus: Probable protein kinase UbiB (549 aa).

Residues 123-501 (DFNETPLASA…QQQAHKSNYL (379 aa)) enclose the Protein kinase domain. Residues 129-137 (LASASISQV) and K152 contribute to the ATP site. The active-site Proton acceptor is D287. Helical transmembrane passes span 498 to 518 (SNYL…LFNQ) and 520 to 540 (ATLW…IIGW).

It belongs to the ABC1 family. UbiB subfamily.

The protein localises to the cell inner membrane. It participates in cofactor biosynthesis; ubiquinone biosynthesis [regulation]. Is probably a protein kinase regulator of UbiI activity which is involved in aerobic coenzyme Q (ubiquinone) biosynthesis. This chain is Probable protein kinase UbiB, found in Shewanella sp. (strain MR-7).